We begin with the raw amino-acid sequence, 411 residues long: F-box protein At4g19940 (411 aa).

The F-box domain maps to 29–75 (RQPIPEIPFDLVIEILTRLPAKSLMRFKSVSKLWSSLICSRNFTNRL).

In Arabidopsis thaliana (Mouse-ear cress), this protein is F-box protein At4g19940.